Here is an 88-residue protein sequence, read N- to C-terminus: Molybdopterin synthase sulfur carrier subunit (88 aa).

Glycine 88 is modified (1-thioglycine; alternate). A Glycyl adenylate; alternate modification is found at glycine 88.

The protein belongs to the MoaD family. MOCS2A subfamily. As to quaternary structure, heterotetramer; composed of 2 small (MOCS2A) and 2 large (MOCS2B) subunits. In terms of processing, C-terminal thiocarboxylation occurs in 2 steps, it is first acyl-adenylated (-COAMP) via the hesA/moeB/thiF part of uba4, then thiocarboxylated (-COSH) via the rhodanese domain of uba4.

It is found in the cytoplasm. The protein operates within cofactor biosynthesis; molybdopterin biosynthesis. Functionally, acts as a sulfur carrier required for molybdopterin biosynthesis. Component of the molybdopterin synthase complex that catalyzes the conversion of precursor Z into molybdopterin by mediating the incorporation of 2 sulfur atoms into precursor Z to generate a dithiolene group. In the complex, serves as sulfur donor by being thiocarboxylated (-COSH) at its C-terminus by uba4. After interaction with MOCS2B, the sulfur is then transferred to precursor Z to form molybdopterin. The protein is Molybdopterin synthase sulfur carrier subunit of Aspergillus niger (strain ATCC MYA-4892 / CBS 513.88 / FGSC A1513).